We begin with the raw amino-acid sequence, 192 residues long: Iron sulfur cluster assembly protein 1, mitochondrial (192 aa).

The N-terminal 53 residues, 1-53 (MSVFRRSVQCVGVLPSILAQRSSLLARPANLQFLKTNSSKFVPQVTANVSRRM), are a transit peptide targeting the mitochondrion.

The protein belongs to the NifU family. In terms of assembly, homodimer. Component of the core Fe-S cluster (ISC) assembly machinery. Requires [2Fe-2S] cluster as cofactor.

It localises to the mitochondrion. The protein resides in the mitochondrion matrix. It functions in the pathway cofactor biosynthesis; iron-sulfur cluster biosynthesis. Scaffold protein for the de novo synthesis of iron-sulfur (Fe-S) clusters within mitochondria, which is required for maturation of both mitochondrial and cytoplasmic [2Fe-2S] and [4Fe-4S] proteins. First, a [2Fe-2S] cluster is transiently assembled on the scaffold protein isu1. In a second step, the cluster is released from isu1, transferred to a glutaredoxin, followed by the formation of mitochondrial [2Fe-2S] proteins, the synthesis of [4Fe-4S] clusters and their target-specific insertion into the recipient apoproteins. Cluster assembly on isu1 depends on the function of the cysteine desulfurase complex nfs1-isd11, which serves as the sulfur donor for cluster synthesis, the iron-binding protein frataxin as the putative iron donor, and the electron transfer chain comprised of ferredoxin reductase and ferredoxin, which receive their electrons from NADH. This Schizosaccharomyces pombe (strain 972 / ATCC 24843) (Fission yeast) protein is Iron sulfur cluster assembly protein 1, mitochondrial (isu1).